The primary structure comprises 57 residues: Large ribosomal subunit protein bL32 (57 aa).

Positions 1–22 are disordered; the sequence is MAVPKKKTSKSKRDKRRATWRH.

The protein belongs to the bacterial ribosomal protein bL32 family.

The sequence is that of Large ribosomal subunit protein bL32 from Nostoc punctiforme (strain ATCC 29133 / PCC 73102).